The chain runs to 500 residues: Probable cytosol aminopeptidase (500 aa).

2 residues coordinate Mn(2+): Lys261 and Asp266. The active site involves Lys273. Mn(2+) is bound by residues Asp284, Asp343, and Glu345. Arg347 is an active-site residue.

Belongs to the peptidase M17 family. Mn(2+) is required as a cofactor.

It localises to the cytoplasm. The enzyme catalyses Release of an N-terminal amino acid, Xaa-|-Yaa-, in which Xaa is preferably Leu, but may be other amino acids including Pro although not Arg or Lys, and Yaa may be Pro. Amino acid amides and methyl esters are also readily hydrolyzed, but rates on arylamides are exceedingly low.. It carries out the reaction Release of an N-terminal amino acid, preferentially leucine, but not glutamic or aspartic acids.. Presumably involved in the processing and regular turnover of intracellular proteins. Catalyzes the removal of unsubstituted N-terminal amino acids from various peptides. This chain is Probable cytosol aminopeptidase, found in Wolbachia pipientis wMel.